Consider the following 72-residue polypeptide: Large ribosomal subunit protein bL31 (72 aa).

Zn(2+) contacts are provided by C16, C18, C38, and C41.

The protein belongs to the bacterial ribosomal protein bL31 family. Type A subfamily. Part of the 50S ribosomal subunit. The cofactor is Zn(2+).

In terms of biological role, binds the 23S rRNA. The sequence is that of Large ribosomal subunit protein bL31 from Vibrio atlanticus (strain LGP32) (Vibrio splendidus (strain Mel32)).